The following is a 640-amino-acid chain: Endoglucanase 2 (640 aa).

The N-terminal stretch at 1–34 is a signal peptide; the sequence is MARGGGAAGVSMAHHLGIALVVLVFAAMAQVARG. Residue D93 is the Nucleophile of the active site. Active-site residues include H428, D480, and E489. A propeptide spans 512–640 (removed in mature form); that stretch reads RARGRLGQSL…DVWVTGYKLV (129 aa). Residue N528 is glycosylated (N-linked (GlcNAc...) asparagine).

The protein belongs to the glycosyl hydrolase 9 (cellulase E) family. As to expression, expressed in roots and flowers.

The protein localises to the secreted. The catalysed reaction is Endohydrolysis of (1-&gt;4)-beta-D-glucosidic linkages in cellulose, lichenin and cereal beta-D-glucans.. Hydrolyzes 1,4-beta-glycosyl linkages of 1,4-beta-glucans and 1,3-1,4-beta-glucans. Possesses broad substrate specificity for hemicelluloses of type II cell walls. Substrate preference is carboxymethyl-cellulose &gt; 1,3-1,4-beta-glucan &gt; lichenan &gt; arabinoxylan &gt; phospho-swollen cellulose &gt; xylan &gt; glucomannan. May participate in lateral root development. This Oryza sativa subsp. japonica (Rice) protein is Endoglucanase 2 (GLU5).